The sequence spans 747 residues: ATPase family gene 2 protein homolog B (747 aa).

Met-1 is modified (N-acetylmethionine). ATP is bound by residues 234 to 241 (GPPGVGKT) and 500 to 507 (GPPGCAKT).

The protein belongs to the AAA ATPase family. AFG2 subfamily. Part of the 55LCC heterohexameric ATPase complex composed at least of AIRIM, AFG2A, AFG2B and CINP. Associates with pre-60S ribosomal particles. As to expression, expressed in neurons; also expressed at lower level in astrocytes, oligodendrocytes and microglia.

It is found in the cytoplasm. The protein resides in the cytoskeleton. It localises to the spindle. Its subcellular location is the nucleus. The catalysed reaction is ATP + H2O = ADP + phosphate + H(+). In the context of 55LCC heterohexameric ATPase complex, the ATPase activity is stimulated by DNA binding and inhibited in presence of RNA. Its function is as follows. ATP-dependent chaperone part of the 55LCC heterohexameric ATPase complex which is chromatin-associated and promotes replisome proteostasis to maintain replication fork progression and genome stability. Required for replication fork progression, sister chromatid cohesion, and chromosome stability. The ATPase activity is specifically enhanced by replication fork DNA and is coupled to cysteine protease-dependent cleavage of replisome substrates in response to replication fork damage. Uses ATPase activity to process replisome substrates in S-phase, facilitating their proteolytic turnover from chromatin to ensure DNA replication and mitotic fidelity. Plays an essential role in the cytoplasmic maturation steps of pre-60S ribosomal particles by promoting the release of shuttling protein RSL24D1/RLP24 from the pre-ribosomal particles. The protein is ATPase family gene 2 protein homolog B (Afg2b) of Rattus norvegicus (Rat).